Consider the following 181-residue polypeptide: Photosystem I assembly protein Ycf4 (181 aa).

The next 2 helical transmembrane spans lie at 19-41 (YAWCFILMTGGIGFCLTGVGSYF) and 61-83 (IVMMFYGTIAILFSLFLMYSIFT).

It belongs to the Ycf4 family.

The protein resides in the plastid. The protein localises to the chloroplast thylakoid membrane. Functionally, seems to be required for the assembly of the photosystem I complex. The chain is Photosystem I assembly protein Ycf4 from Guillardia theta (Cryptophyte).